Here is a 354-residue protein sequence, read N- to C-terminus: UDP-N-acetylglucosamine--N-acetylmuramyl-(pentapeptide) pyrophosphoryl-undecaprenol N-acetylglucosamine transferase (354 aa).

UDP-N-acetyl-alpha-D-glucosamine contacts are provided by residues 15–17 (TGG), Asn-127, Arg-163, Ser-191, Ile-244, 263–268 (ALTVSE), and Gln-288.

It belongs to the glycosyltransferase 28 family. MurG subfamily.

It is found in the cell inner membrane. It catalyses the reaction di-trans,octa-cis-undecaprenyl diphospho-N-acetyl-alpha-D-muramoyl-L-alanyl-D-glutamyl-meso-2,6-diaminopimeloyl-D-alanyl-D-alanine + UDP-N-acetyl-alpha-D-glucosamine = di-trans,octa-cis-undecaprenyl diphospho-[N-acetyl-alpha-D-glucosaminyl-(1-&gt;4)]-N-acetyl-alpha-D-muramoyl-L-alanyl-D-glutamyl-meso-2,6-diaminopimeloyl-D-alanyl-D-alanine + UDP + H(+). Its pathway is cell wall biogenesis; peptidoglycan biosynthesis. Cell wall formation. Catalyzes the transfer of a GlcNAc subunit on undecaprenyl-pyrophosphoryl-MurNAc-pentapeptide (lipid intermediate I) to form undecaprenyl-pyrophosphoryl-MurNAc-(pentapeptide)GlcNAc (lipid intermediate II). The sequence is that of UDP-N-acetylglucosamine--N-acetylmuramyl-(pentapeptide) pyrophosphoryl-undecaprenol N-acetylglucosamine transferase from Serratia proteamaculans (strain 568).